A 130-amino-acid chain; its full sequence is Small ribosomal subunit protein uS11 (130 aa).

The protein belongs to the universal ribosomal protein uS11 family. Part of the 30S ribosomal subunit. Interacts with proteins S7 and S18. Binds to IF-3.

Functionally, located on the platform of the 30S subunit, it bridges several disparate RNA helices of the 16S rRNA. Forms part of the Shine-Dalgarno cleft in the 70S ribosome. The protein is Small ribosomal subunit protein uS11 of Aliarcobacter butzleri (strain RM4018) (Arcobacter butzleri).